The following is a 283-amino-acid chain: Coiled-coil domain-containing protein 42 homolog (283 aa).

2 coiled-coil regions span residues 31 to 139 (ATQL…LQRY) and 174 to 204 (QDLR…HRVS).

Belongs to the CFAP73 family.

The polypeptide is Coiled-coil domain-containing protein 42 homolog (Monosiga brevicollis (Choanoflagellate)).